Consider the following 80-residue polypeptide: ATP synthase subunit c (80 aa).

2 helical membrane-spanning segments follow: residues 11–31 (IAAT…IGIL) and 54–74 (FIVM…GLYI).

Belongs to the ATPase C chain family. In terms of assembly, F-type ATPases have 2 components, F(1) - the catalytic core - and F(0) - the membrane proton channel. F(1) has five subunits: alpha(3), beta(3), gamma(1), delta(1), epsilon(1). F(0) has three main subunits: a(1), b(2) and c(10-14). The alpha and beta chains form an alternating ring which encloses part of the gamma chain. F(1) is attached to F(0) by a central stalk formed by the gamma and epsilon chains, while a peripheral stalk is formed by the delta and b chains.

The protein resides in the cell membrane. Functionally, f(1)F(0) ATP synthase produces ATP from ADP in the presence of a proton or sodium gradient. F-type ATPases consist of two structural domains, F(1) containing the extramembraneous catalytic core and F(0) containing the membrane proton channel, linked together by a central stalk and a peripheral stalk. During catalysis, ATP synthesis in the catalytic domain of F(1) is coupled via a rotary mechanism of the central stalk subunits to proton translocation. Its function is as follows. Key component of the F(0) channel; it plays a direct role in translocation across the membrane. A homomeric c-ring of between 10-14 subunits forms the central stalk rotor element with the F(1) delta and epsilon subunits. This is ATP synthase subunit c from Baumannia cicadellinicola subsp. Homalodisca coagulata.